We begin with the raw amino-acid sequence, 234 residues long: Ribose-5-phosphate isomerase A (234 aa).

Substrate contacts are provided by residues 34 to 37 (TGST), 90 to 93 (DGAD), and 103 to 106 (KGGG). Catalysis depends on Glu-112, which acts as the Proton acceptor. Residue Lys-130 participates in substrate binding.

Belongs to the ribose 5-phosphate isomerase family. In terms of assembly, homodimer.

The enzyme catalyses aldehydo-D-ribose 5-phosphate = D-ribulose 5-phosphate. Its pathway is carbohydrate degradation; pentose phosphate pathway; D-ribose 5-phosphate from D-ribulose 5-phosphate (non-oxidative stage): step 1/1. Its function is as follows. Catalyzes the reversible conversion of ribose-5-phosphate to ribulose 5-phosphate. The protein is Ribose-5-phosphate isomerase A of Methanosarcina acetivorans (strain ATCC 35395 / DSM 2834 / JCM 12185 / C2A).